The primary structure comprises 82 residues: ATP synthase subunit c (82 aa).

The next 2 helical transmembrane spans lie at 7 to 27 and 57 to 77; these read AASV…PGIG and LAFM…LLFA.

It belongs to the ATPase C chain family. F-type ATPases have 2 components, F(1) - the catalytic core - and F(0) - the membrane proton channel. F(1) has five subunits: alpha(3), beta(3), gamma(1), delta(1), epsilon(1). F(0) has four main subunits: a(1), b(1), b'(1) and c(10-14). The alpha and beta chains form an alternating ring which encloses part of the gamma chain. F(1) is attached to F(0) by a central stalk formed by the gamma and epsilon chains, while a peripheral stalk is formed by the delta, b and b' chains.

The protein localises to the cellular thylakoid membrane. In terms of biological role, f(1)F(0) ATP synthase produces ATP from ADP in the presence of a proton or sodium gradient. F-type ATPases consist of two structural domains, F(1) containing the extramembraneous catalytic core and F(0) containing the membrane proton channel, linked together by a central stalk and a peripheral stalk. During catalysis, ATP synthesis in the catalytic domain of F(1) is coupled via a rotary mechanism of the central stalk subunits to proton translocation. Functionally, key component of the F(0) channel; it plays a direct role in translocation across the membrane. A homomeric c-ring of between 10-14 subunits forms the central stalk rotor element with the F(1) delta and epsilon subunits. This chain is ATP synthase subunit c, found in Synechococcus sp. (strain RCC307).